Reading from the N-terminus, the 435-residue chain is ATP-dependent protease ATPase subunit HslU (435 aa).

ATP-binding positions include I18, 60–65 (GVGKTE), D248, E313, and R385.

The protein belongs to the ClpX chaperone family. HslU subfamily. A double ring-shaped homohexamer of HslV is capped on each side by a ring-shaped HslU homohexamer. The assembly of the HslU/HslV complex is dependent on binding of ATP.

It localises to the cytoplasm. ATPase subunit of a proteasome-like degradation complex; this subunit has chaperone activity. The binding of ATP and its subsequent hydrolysis by HslU are essential for unfolding of protein substrates subsequently hydrolyzed by HslV. HslU recognizes the N-terminal part of its protein substrates and unfolds these before they are guided to HslV for hydrolysis. In Rhizobium etli (strain ATCC 51251 / DSM 11541 / JCM 21823 / NBRC 15573 / CFN 42), this protein is ATP-dependent protease ATPase subunit HslU.